Reading from the N-terminus, the 570-residue chain is Proline--tRNA ligase (570 aa).

The protein belongs to the class-II aminoacyl-tRNA synthetase family. ProS type 1 subfamily. Homodimer.

It localises to the cytoplasm. The enzyme catalyses tRNA(Pro) + L-proline + ATP = L-prolyl-tRNA(Pro) + AMP + diphosphate. Functionally, catalyzes the attachment of proline to tRNA(Pro) in a two-step reaction: proline is first activated by ATP to form Pro-AMP and then transferred to the acceptor end of tRNA(Pro). As ProRS can inadvertently accommodate and process non-cognate amino acids such as alanine and cysteine, to avoid such errors it has two additional distinct editing activities against alanine. One activity is designated as 'pretransfer' editing and involves the tRNA(Pro)-independent hydrolysis of activated Ala-AMP. The other activity is designated 'posttransfer' editing and involves deacylation of mischarged Ala-tRNA(Pro). The misacylated Cys-tRNA(Pro) is not edited by ProRS. This is Proline--tRNA ligase from Thermoanaerobacter sp. (strain X514).